The primary structure comprises 523 residues: GMP synthase [glutamine-hydrolyzing] (523 aa).

A Glutamine amidotransferase type-1 domain is found at 8-205; sequence KILILDFGSQ…VVNICGCETK (198 aa). C85 functions as the Nucleophile in the catalytic mechanism. Residues H179 and E181 contribute to the active site. Positions 206 to 398 constitute a GMPS ATP-PPase domain; sequence WTAENIIEDA…LGLPAEMINR (193 aa). 233-239 is a binding site for ATP; it reads SGGVDSS.

Homodimer.

It carries out the reaction XMP + L-glutamine + ATP + H2O = GMP + L-glutamate + AMP + diphosphate + 2 H(+). Its pathway is purine metabolism; GMP biosynthesis; GMP from XMP (L-Gln route): step 1/1. Functionally, catalyzes the synthesis of GMP from XMP. The chain is GMP synthase [glutamine-hydrolyzing] from Haemophilus influenzae (strain PittGG).